The sequence spans 382 residues: MSTYTRPVMLLLSGLLLLTLAIAVLNTLVPLWLAQEHMSTWQVGVVSSSYFTGNLVGTLLTGYVIKRIGFNRSYYLASFIFAAGCAGLGLMIGFWSWLAWRFVAGVGCAMIWVVVESALMCSGTSRNRGRLLAAYMMVYYVGTFLGQLLVSKVSTELMSVLPWVTGLTLAGILPLLFTRVLNQQAENHDATSITSMLKLRQARLGVNGCIISGIVLGSLYGLMPLYLNHKGVSNASIGFWMAVLVSAGILGQWPIGRLADKFGRLLVLRVQVFVVILGSIAMLSQAAMAPALFILGAAGFTLYPVAMAWACEKVEHHQLVAMNQALLLSYTVGSLLGPSFTAMLMQNFSDNLLFIMIASVSFIYLLMLLRNAGHTPKPVAHV.

A run of 12 helical transmembrane segments spans residues 14–34, 45–65, 79–99, 102–122, 131–151, 157–177, 204–224, 235–255, 270–290, 291–311, 325–345, and 348–368; these read GLLLLTLAIAVLNTLVPLWLA, VVSSSYFTGNLVGTLLTGYVI, FIFAAGCAGLGLMIGFWSWLA, FVAGVGCAMIWVVVESALMCS, LLAAYMMVYYVGTFLGQLLVS, LMSVLPWVTGLTLAGILPLLF, LGVNGCIISGIVLGSLYGLMP, ASIGFWMAVLVSAGILGQWPI, VQVFVVILGSIAMLSQAAMAP, ALFILGAAGFTLYPVAMAWAC, ALLLSYTVGSLLGPSFTAMLM, and FSDNLLFIMIASVSFIYLLML.

Belongs to the major facilitator superfamily. YcaD (TC 2.A.1.26) family.

It is found in the cell inner membrane. This is an uncharacterized protein from Escherichia coli O7:K1 (strain IAI39 / ExPEC).